Consider the following 67-residue polypeptide: MKKNIHPKWYKHSIVYGNGQQILTVGSTKPELHVEVWSSIHPFYTGSQKQLDTEGRIEKFMRKYGMK.

Belongs to the bacterial ribosomal protein bL31 family. Type A subfamily. As to quaternary structure, part of the 50S ribosomal subunit.

It is found in the plastid. The protein resides in the chloroplast. Its function is as follows. Binds the 23S rRNA. The sequence is that of Large ribosomal subunit protein bL31c (rpl31) from Cyanidioschyzon merolae (strain NIES-3377 / 10D) (Unicellular red alga).